We begin with the raw amino-acid sequence, 337 residues long: Biotin synthase (337 aa).

Positions 58-288 (AGSELLHACS…AHPHKIIKFA (231 aa)) constitute a Radical SAM core domain. Positions 76, 80, and 83 each coordinate [4Fe-4S] cluster. The [2Fe-2S] cluster site is built by C155, C216, and K286.

The protein belongs to the radical SAM superfamily. Biotin synthase family. In terms of assembly, homodimer. [4Fe-4S] cluster is required as a cofactor. It depends on [2Fe-2S] cluster as a cofactor.

It catalyses the reaction (4R,5S)-dethiobiotin + (sulfur carrier)-SH + 2 reduced [2Fe-2S]-[ferredoxin] + 2 S-adenosyl-L-methionine = (sulfur carrier)-H + biotin + 2 5'-deoxyadenosine + 2 L-methionine + 2 oxidized [2Fe-2S]-[ferredoxin]. It participates in cofactor biosynthesis; biotin biosynthesis; biotin from 7,8-diaminononanoate: step 2/2. Catalyzes the conversion of dethiobiotin (DTB) to biotin by the insertion of a sulfur atom into dethiobiotin via a radical-based mechanism. The protein is Biotin synthase of Pelodictyon phaeoclathratiforme (strain DSM 5477 / BU-1).